A 252-amino-acid polypeptide reads, in one-letter code: 5-oxoprolinase subunit A (252 aa).

It belongs to the LamB/PxpA family. In terms of assembly, forms a complex composed of PxpA, PxpB and PxpC.

The enzyme catalyses 5-oxo-L-proline + ATP + 2 H2O = L-glutamate + ADP + phosphate + H(+). Its function is as follows. Catalyzes the cleavage of 5-oxoproline to form L-glutamate coupled to the hydrolysis of ATP to ADP and inorganic phosphate. The chain is 5-oxoprolinase subunit A from Staphylococcus epidermidis (strain ATCC 35984 / DSM 28319 / BCRC 17069 / CCUG 31568 / BM 3577 / RP62A).